Reading from the N-terminus, the 834-residue chain is Nucleolar protein 9 (834 aa).

Over residues 1–10 (MGKNRKSKRQ) the composition is skewed to basic residues. The segment at 1–54 (MGKNRKSKRQLIRDEKRAKKRGHENAEEEVRDAKRQRRTDGDEEHNADFIPLDG) is disordered. Over residues 38–47 (RTDGDEEHNA) the composition is skewed to basic and acidic residues. Pumilio repeat units follow at residues 145–180 (EAKG…SMFD), 181–216 (AFSG…ELAG), 250–290 (EFEE…SLLQ), and 630–666 (AMLP…PVVP). The span at 749-764 (EEAFPEEMEEDQPEES) shows a compositional bias: acidic residues. Positions 749–834 (EEAFPEEMEE…VEEDAMEIDG (86 aa)) are disordered. Positions 770-822 (KKEKKEKKEKKEKKEKKEKKEKKEKKEKKEKKEKKEKKEKKEKKEKKEKKEKK) are enriched in basic residues.

This sequence belongs to the NOP9 family.

It is found in the nucleus. The protein localises to the nucleolus. In terms of biological role, RNA-binding nucleolar protein required for pre-rRNA processing. Involved in production of 18S rRNA and assembly of small ribosomal subunit. This chain is Nucleolar protein 9 (NOP9), found in Podospora anserina (strain S / ATCC MYA-4624 / DSM 980 / FGSC 10383) (Pleurage anserina).